A 317-amino-acid chain; its full sequence is Retinol dehydrogenase 16 (317 aa).

Residue 33–57 participates in NAD(+) binding; that stretch reads FITGCDSGFGKLLARQLDARGLRVL. Residue Ser-164 participates in substrate binding. The Proton acceptor role is filled by Tyr-176. A helical transmembrane segment spans residues 289 to 309; sequence LLYLPMSYMPTFLVDAIMYWV.

This sequence belongs to the short-chain dehydrogenases/reductases (SDR) family. As to quaternary structure, homodimer. Post-translationally, not N-glycosylated. As to expression, highly expressed in adult liver (at protein level). Detected in endometrium, liver and foreskin. Detected in the spineous layers of adult skin, and at lower levels in basal and granular skin layers. Detected in fetal liver and lung.

Its subcellular location is the microsome membrane. It localises to the endoplasmic reticulum membrane. It carries out the reaction all-trans-retinol--[retinol-binding protein] + NAD(+) = all-trans-retinal--[retinol-binding protein] + NADH + H(+). It catalyses the reaction all-trans-retinol + NAD(+) = all-trans-retinal + NADH + H(+). The enzyme catalyses 13-cis-retinol + NAD(+) = 13-cis-retinal + NADH + H(+). The catalysed reaction is 11-cis-retinol + NAD(+) = 11-cis-retinal + NADH + H(+). It carries out the reaction 9-cis-retinol + NAD(+) = 9-cis-retinal + NADH + H(+). It catalyses the reaction 5alpha-androstane-3alpha,17beta-diol + NAD(+) = 17beta-hydroxy-5alpha-androstan-3-one + NADH + H(+). The enzyme catalyses androsterone + NAD(+) = 5alpha-androstan-3,17-dione + NADH + H(+). It functions in the pathway cofactor metabolism; retinol metabolism. Its activity is regulated as follows. Inhibited by citral, perillyl alcohol, geraniol, farnesol and geranyl geraniol. Its function is as follows. Oxidoreductase with a preference for NAD. Oxidizes all-trans-retinol, 9-cis-retinol, 11-cis-retinol and 13-cis-retinol to the corresponding aldehydes. Has higher activity towards CRBP-bound retinol than with free retinol. Also oxidizes 3-alpha-hydroxysteroids. Oxidizes androstanediol and androsterone to dihydrotestosterone and androstanedione. Can also catalyze the reverse reaction. This chain is Retinol dehydrogenase 16, found in Homo sapiens (Human).